The chain runs to 175 residues: Nucleoside triphosphate/diphosphate phosphatase (175 aa).

The active-site Proton donor is R23. N87, D103, D105, D107, D120, and E123 together coordinate Mg(2+).

Belongs to the Ntdp family. It depends on Mg(2+) as a cofactor.

The catalysed reaction is a ribonucleoside 5'-triphosphate + H2O = a ribonucleoside 5'-diphosphate + phosphate + H(+). The enzyme catalyses a ribonucleoside 5'-diphosphate + H2O = a ribonucleoside 5'-phosphate + phosphate + H(+). In terms of biological role, has nucleoside phosphatase activity towards nucleoside triphosphates and nucleoside diphosphates. This is Nucleoside triphosphate/diphosphate phosphatase from Shouchella clausii (strain KSM-K16) (Alkalihalobacillus clausii).